The chain runs to 1014 residues: Probable transport protein MmpL11 (1014 aa).

12 consecutive transmembrane segments (helical) span residues 13 to 33, 156 to 173, 188 to 208, 235 to 255, 279 to 299, 311 to 331, 373 to 393, 530 to 550, 560 to 580, 598 to 618, 649 to 669, and 671 to 691; these read WLVF…AMTQ, VRLY…VAAN, IILI…VPLA, TSTV…FILM, GLAV…IYLI, AILA…AALA, ASAA…MMLG, TEPL…LISI, VLMT…VFQW, VPPL…IFLL, AALI…PLVA, and IGVA…LVLV. A disordered region spans residues 783-802; it reads SDRVLPGAATQESEEDPAMG.

Belongs to the resistance-nodulation-cell division (RND) (TC 2.A.6) family. MmpL subfamily.

The protein resides in the cell membrane. The protein is Probable transport protein MmpL11 (mmpL11) of Mycobacterium leprae (strain TN).